The sequence spans 156 residues: ATP synthase subunit b (156 aa).

Residues 7–27 form a helical membrane-spanning segment; that stretch reads LIGQTVAFIIFVWFCMKFVWP.

The protein belongs to the ATPase B chain family. F-type ATPases have 2 components, F(1) - the catalytic core - and F(0) - the membrane proton channel. F(1) has five subunits: alpha(3), beta(3), gamma(1), delta(1), epsilon(1). F(0) has three main subunits: a(1), b(2) and c(10-14). The alpha and beta chains form an alternating ring which encloses part of the gamma chain. F(1) is attached to F(0) by a central stalk formed by the gamma and epsilon chains, while a peripheral stalk is formed by the delta and b chains.

The protein localises to the cell inner membrane. Its function is as follows. F(1)F(0) ATP synthase produces ATP from ADP in the presence of a proton or sodium gradient. F-type ATPases consist of two structural domains, F(1) containing the extramembraneous catalytic core and F(0) containing the membrane proton channel, linked together by a central stalk and a peripheral stalk. During catalysis, ATP synthesis in the catalytic domain of F(1) is coupled via a rotary mechanism of the central stalk subunits to proton translocation. Functionally, component of the F(0) channel, it forms part of the peripheral stalk, linking F(1) to F(0). This Shewanella sp. (strain ANA-3) protein is ATP synthase subunit b.